The sequence spans 345 residues: Fructose-bisphosphate aldolase, plasmid (345 aa).

Residue S50 participates in D-glyceraldehyde 3-phosphate binding. Residue D83 is the Proton donor of the active site. Zn(2+)-binding residues include H84, D105, E142, and H198. G199 contributes to the dihydroxyacetone phosphate binding site. H232 is a binding site for Zn(2+). Dihydroxyacetone phosphate-binding positions include 233–235 (GSS) and 275–278 (NIDT).

Belongs to the class II fructose-bisphosphate aldolase family. Homodimer. It depends on Zn(2+) as a cofactor.

It catalyses the reaction beta-D-fructose 1,6-bisphosphate = D-glyceraldehyde 3-phosphate + dihydroxyacetone phosphate. The protein operates within carbohydrate biosynthesis; Calvin cycle. It participates in carbohydrate degradation; glycolysis; D-glyceraldehyde 3-phosphate and glycerone phosphate from D-glucose: step 4/4. Catalyzes the aldol condensation of dihydroxyacetone phosphate (DHAP or glycerone-phosphate) with glyceraldehyde 3-phosphate (G3P) to form fructose 1,6-bisphosphate (FBP) in gluconeogenesis and the reverse reaction in glycolysis. This is Fructose-bisphosphate aldolase, plasmid (cbbAP) from Cupriavidus necator (strain ATCC 17699 / DSM 428 / KCTC 22496 / NCIMB 10442 / H16 / Stanier 337) (Ralstonia eutropha).